Consider the following 339-residue polypeptide: Ferrochelatase (339 aa).

2 residues coordinate Fe cation: histidine 202 and glutamate 283.

It belongs to the ferrochelatase family.

Its subcellular location is the cytoplasm. It carries out the reaction heme b + 2 H(+) = protoporphyrin IX + Fe(2+). It participates in porphyrin-containing compound metabolism; protoheme biosynthesis; protoheme from protoporphyrin-IX: step 1/1. Catalyzes the ferrous insertion into protoporphyrin IX. This is Ferrochelatase from Psychrobacter sp. (strain PRwf-1).